The chain runs to 132 residues: Cytochrome c-554 (132 aa).

Residues 1 to 24 (MKSISMLTLAASVAFAVTAGQAVA) form the signal peptide. Residues 26–126 (GDPAAGEKVF…NVWAYLSQFG (101 aa)) form the Cytochrome c domain. Positions 38, 41, 42, and 104 each coordinate heme c.

Binds 1 heme c group covalently per subunit.

It localises to the periplasm. The polypeptide is Cytochrome c-554 (Methylosinus trichosporium).